Consider the following 234-residue polypeptide: UPF0173 metal-dependent hydrolase Meso_1362 (234 aa).

Belongs to the UPF0173 family.

This is UPF0173 metal-dependent hydrolase Meso_1362 from Chelativorans sp. (strain BNC1).